A 187-amino-acid polypeptide reads, in one-letter code: Elongation factor P (187 aa).

This sequence belongs to the elongation factor P family.

The protein resides in the cytoplasm. It functions in the pathway protein biosynthesis; polypeptide chain elongation. In terms of biological role, involved in peptide bond synthesis. Stimulates efficient translation and peptide-bond synthesis on native or reconstituted 70S ribosomes in vitro. Probably functions indirectly by altering the affinity of the ribosome for aminoacyl-tRNA, thus increasing their reactivity as acceptors for peptidyl transferase. This chain is Elongation factor P, found in Desulfotalea psychrophila (strain LSv54 / DSM 12343).